Consider the following 108-residue polypeptide: Glutaredoxin 4 (108 aa).

A Glutaredoxin domain is found at Phe-4–Tyr-106. Residue Lys-21 coordinates glutathione. Residue Cys-29 participates in [2Fe-2S] cluster binding. Glutathione-binding positions include Arg-58, Phe-70, and Cys-83 to Ser-84.

It belongs to the glutaredoxin family. Monothiol subfamily. As to quaternary structure, homodimer.

Its subcellular location is the cytoplasm. Its function is as follows. Monothiol glutaredoxin involved in the biogenesis of iron-sulfur clusters. The protein is Glutaredoxin 4 (grxD) of Buchnera aphidicola subsp. Acyrthosiphon pisum (strain APS) (Acyrthosiphon pisum symbiotic bacterium).